We begin with the raw amino-acid sequence, 130 residues long: Protein ApaG (130 aa).

The ApaG domain maps to 3-127; the sequence is KAETRGITVT…FSLDSPHLRR (125 aa).

This Methylorubrum populi (strain ATCC BAA-705 / NCIMB 13946 / BJ001) (Methylobacterium populi) protein is Protein ApaG.